The primary structure comprises 122 residues: UPF0482 protein Spro_2288 (122 aa).

The N-terminal stretch at 1–31 is a signal peptide; sequence MKTLSTQRLLRGMLPVAMLMLMGAWQAPALA. Residues 46–71 form a disordered region; that stretch reads SNSGAMSTEAARQSKQQFNDTKSLRN.

It belongs to the UPF0482 family.

This Serratia proteamaculans (strain 568) protein is UPF0482 protein Spro_2288.